The primary structure comprises 172 residues: AIG2-like protein C (172 aa).

13–18 (YGSLQE) contributes to the substrate binding site. The active-site Proton acceptor is the glutamate 81.

Belongs to the gamma-glutamylcyclotransferase family. As to expression, expressed in flowers, leaves, stems and roots.

Putative gamma-glutamylcyclotransferase. The chain is AIG2-like protein C from Arabidopsis thaliana (Mouse-ear cress).